A 276-amino-acid polypeptide reads, in one-letter code: Bis(5'-nucleosyl)-tetraphosphatase, symmetrical (276 aa).

Belongs to the Ap4A hydrolase family.

The enzyme catalyses P(1),P(4)-bis(5'-adenosyl) tetraphosphate + H2O = 2 ADP + 2 H(+). Its function is as follows. Hydrolyzes diadenosine 5',5'''-P1,P4-tetraphosphate to yield ADP. This chain is Bis(5'-nucleosyl)-tetraphosphatase, symmetrical, found in Legionella pneumophila (strain Lens).